The following is a 286-amino-acid chain: Meteorin-like protein (286 aa).

The N-terminal stretch at 1–21 (MLSPFLAYLLSVVLLCRIARS) is a signal peptide. 5 cysteine pairs are disulfide-bonded: Cys28–Cys51, Cys84–Cys120, Cys165–Cys235, Cys168–Cys259, and Cys178–Cys281.

This sequence belongs to the meteorin family.

It is found in the secreted. Hormone induced following exercise or cold exposure that promotes energy expenditure. Induced either in the skeletal muscle after exercise or in adipose tissue following cold exposure and is present in the circulation. Able to stimulate energy expenditure associated with the browning of the white fat depots and improves glucose tolerance. The protein is Meteorin-like protein (metrnl) of Danio rerio (Zebrafish).